Here is a 233-residue protein sequence, read N- to C-terminus: Ubiquinone biosynthesis O-methyltransferase (233 aa).

Residues Arg37, Gly56, Asp77, and Met121 each coordinate S-adenosyl-L-methionine.

This sequence belongs to the methyltransferase superfamily. UbiG/COQ3 family.

It catalyses the reaction a 3-demethylubiquinol + S-adenosyl-L-methionine = a ubiquinol + S-adenosyl-L-homocysteine + H(+). The enzyme catalyses a 3-(all-trans-polyprenyl)benzene-1,2-diol + S-adenosyl-L-methionine = a 2-methoxy-6-(all-trans-polyprenyl)phenol + S-adenosyl-L-homocysteine + H(+). It participates in cofactor biosynthesis; ubiquinone biosynthesis. In terms of biological role, O-methyltransferase that catalyzes the 2 O-methylation steps in the ubiquinone biosynthetic pathway. The protein is Ubiquinone biosynthesis O-methyltransferase of Azoarcus sp. (strain BH72).